The primary structure comprises 64 residues: MRCLPVFVILLLLIASAPSVDARPKTKDDIPLVSFQDNAKRALQILSNKRYCCYFDYSCCLYLR.

An N-terminal signal peptide occupies residues 1-22 (MRCLPVFVILLLLIASAPSVDA). Positions 23–48 (RPKTKDDIPLVSFQDNAKRALQILSN) are excised as a propeptide.

Belongs to the conotoxin T superfamily. Post-translationally, contains 2 disulfide bonds that can be either 'C1-C3, C2-C4' or 'C1-C4, C2-C3', since these disulfide connectivities have been observed for conotoxins with cysteine framework V (for examples, see AC P0DQQ7 and AC P81755). As to expression, expressed by the venom duct.

It is found in the secreted. This is Conotoxin Pn-B01122 from Conus pennaceus (Feathered cone).